Here is a 165-residue protein sequence, read N- to C-terminus: Ubiquitin-fold modifier-conjugating enzyme 1 (165 aa).

Catalysis depends on cysteine 116, which acts as the Glycyl thioester intermediate.

Belongs to the ubiquitin-conjugating enzyme family. UFC1 subfamily.

Its function is as follows. E2-like enzyme which forms an intermediate with UFM1 via a thioester linkage. This Drosophila virilis (Fruit fly) protein is Ubiquitin-fold modifier-conjugating enzyme 1.